The following is a 101-amino-acid chain: Urease subunit beta (101 aa).

It belongs to the urease beta subunit family. In terms of assembly, heterotrimer of UreA (gamma), UreB (beta) and UreC (alpha) subunits. Three heterotrimers associate to form the active enzyme.

Its subcellular location is the cytoplasm. It carries out the reaction urea + 2 H2O + H(+) = hydrogencarbonate + 2 NH4(+). It functions in the pathway nitrogen metabolism; urea degradation; CO(2) and NH(3) from urea (urease route): step 1/1. The polypeptide is Urease subunit beta (Burkholderia multivorans (strain ATCC 17616 / 249)).